We begin with the raw amino-acid sequence, 63 residues long: Prokaryotic ubiquitin-like protein Pup (63 aa).

Positions 1-28 (MPQEFEQIRSADQPLDSEESAPVAGART) are disordered. The interval 19 to 57 (ESAPVAGARTDDTVDALDAVLDDIESVLETNAEEYVGSF) is ARC ATPase binding. Glu63 is covalently cross-linked (Isoglutamyl lysine isopeptide (Glu-Lys) (interchain with K-? in acceptor proteins)).

Belongs to the prokaryotic ubiquitin-like protein family. Strongly interacts with the proteasome-associated ATPase ARC through a hydrophobic interface; the interacting region of Pup lies in its C-terminal half. There is one Pup binding site per ARC hexamer ring.

Its pathway is protein degradation; proteasomal Pup-dependent pathway. Its function is as follows. Protein modifier that is covalently attached to lysine residues of substrate proteins, thereby targeting them for proteasomal degradation. The tagging system is termed pupylation. This chain is Prokaryotic ubiquitin-like protein Pup, found in Bifidobacterium dentium (strain ATCC 27534 / DSM 20436 / JCM 1195 / Bd1).